A 1357-amino-acid polypeptide reads, in one-letter code: DNA-directed RNA polymerase subunit beta (1357 aa).

This sequence belongs to the RNA polymerase beta chain family. The RNAP catalytic core consists of 2 alpha, 1 beta, 1 beta' and 1 omega subunit. When a sigma factor is associated with the core the holoenzyme is formed, which can initiate transcription.

It carries out the reaction RNA(n) + a ribonucleoside 5'-triphosphate = RNA(n+1) + diphosphate. Functionally, DNA-dependent RNA polymerase catalyzes the transcription of DNA into RNA using the four ribonucleoside triphosphates as substrates. This Acinetobacter baumannii (strain ATCC 17978 / DSM 105126 / CIP 53.77 / LMG 1025 / NCDC KC755 / 5377) protein is DNA-directed RNA polymerase subunit beta.